A 78-amino-acid polypeptide reads, in one-letter code: Putative membrane protein insertion efficiency factor (78 aa).

It belongs to the UPF0161 family.

The protein localises to the cell membrane. Functionally, could be involved in insertion of integral membrane proteins into the membrane. The sequence is that of Putative membrane protein insertion efficiency factor from Bacillus thuringiensis subsp. konkukian (strain 97-27).